The chain runs to 721 residues: Catalase-peroxidase 1 (721 aa).

The tryptophyl-tyrosyl-methioninium (Trp-Tyr) (with M-252) cross-link spans 98-226; sequence WHAAGTYRIA…LAAVMMGLIY (129 aa). Histidine 99 acts as the Proton acceptor in catalysis. Positions 226 to 252 form a cross-link, tryptophyl-tyrosyl-methioninium (Tyr-Met) (with W-98); that stretch reads YVNPEGVDGQPDPLKTAHDVRVTFARM. Position 267 (histidine 267) interacts with heme b.

Belongs to the peroxidase family. Peroxidase/catalase subfamily. Homodimer or homotetramer. Heme b serves as cofactor. In terms of processing, formation of the three residue Trp-Tyr-Met cross-link is important for the catalase, but not the peroxidase activity of the enzyme.

It carries out the reaction H2O2 + AH2 = A + 2 H2O. The catalysed reaction is 2 H2O2 = O2 + 2 H2O. Functionally, bifunctional enzyme with both catalase and broad-spectrum peroxidase activity. The polypeptide is Catalase-peroxidase 1 (Vibrio parahaemolyticus serotype O3:K6 (strain RIMD 2210633)).